A 258-amino-acid chain; its full sequence is Imidazole glycerol phosphate synthase subunit HisF (258 aa).

Residues Asp11 and Asp130 contribute to the active site.

Belongs to the HisA/HisF family. Heterodimer of HisH and HisF.

The protein resides in the cytoplasm. It carries out the reaction 5-[(5-phospho-1-deoxy-D-ribulos-1-ylimino)methylamino]-1-(5-phospho-beta-D-ribosyl)imidazole-4-carboxamide + L-glutamine = D-erythro-1-(imidazol-4-yl)glycerol 3-phosphate + 5-amino-1-(5-phospho-beta-D-ribosyl)imidazole-4-carboxamide + L-glutamate + H(+). It functions in the pathway amino-acid biosynthesis; L-histidine biosynthesis; L-histidine from 5-phospho-alpha-D-ribose 1-diphosphate: step 5/9. Its function is as follows. IGPS catalyzes the conversion of PRFAR and glutamine to IGP, AICAR and glutamate. The HisF subunit catalyzes the cyclization activity that produces IGP and AICAR from PRFAR using the ammonia provided by the HisH subunit. The protein is Imidazole glycerol phosphate synthase subunit HisF of Sodalis glossinidius (strain morsitans).